The following is a 399-amino-acid chain: Exodeoxyribonuclease 7 large subunit (399 aa).

The protein belongs to the XseA family. Heterooligomer composed of large and small subunits.

It localises to the cytoplasm. It carries out the reaction Exonucleolytic cleavage in either 5'- to 3'- or 3'- to 5'-direction to yield nucleoside 5'-phosphates.. Bidirectionally degrades single-stranded DNA into large acid-insoluble oligonucleotides, which are then degraded further into small acid-soluble oligonucleotides. The sequence is that of Exodeoxyribonuclease 7 large subunit from Clostridium acetobutylicum (strain ATCC 824 / DSM 792 / JCM 1419 / IAM 19013 / LMG 5710 / NBRC 13948 / NRRL B-527 / VKM B-1787 / 2291 / W).